A 615-amino-acid chain; its full sequence is Delta-like protein B (615 aa).

Positions 1–20 (MAHLSLYCLLSVSLLQLVAS) are cleaved as a signal peptide. At 21–522 (SGVFELKVHS…VGQTSPSAVA (502 aa)) the chain is on the extracellular side. The region spanning 159–203 (VFCDEFYFGEACSDYCRPRDDTLGHYTCDENGNKECLVGWQGDYC) is the DSL domain. 26 cysteine pairs are disulfide-bonded: Cys161-Cys170, Cys174-Cys186, Cys194-Cys203, Cys208-Cys219, Cys212-Cys225, Cys227-Cys236, Cys245-Cys250, Cys258-Cys267, Cys274-Cys286, Cys280-Cys296, Cys298-Cys307, Cys314-Cys325, Cys319-Cys334, Cys336-Cys345, Cys352-Cys363, Cys357-Cys373, Cys375-Cys384, Cys391-Cys402, Cys396-Cys411, Cys413-Cys422, Cys429-Cys440, Cys434-Cys449, Cys451-Cys460, Cys467-Cys478, Cys472-Cys487, and Cys489-Cys498. EGF-like domains follow at residues 204–237 (SDPI…PSCS), 241–268 (HYPG…LFCN), and 270–308 (DLNY…TNCE). The region spanning 310–346 (EINECDCNPCKNGGSCNDLENDYSCTCPQGFYGKNCE) is the EGF-like 4; calcium-binding domain. 2 consecutive EGF-like domains span residues 348–385 (IAMT…SNCE) and 387–423 (RLDR…SRCE). Residues 425–461 (NIDDCARYPCQNAGTCQDGINDYTCTCTLGFTGKNCS) enclose the EGF-like 7; calcium-binding domain. Residue Asn459 is glycosylated (N-linked (GlcNAc...) asparagine). The EGF-like 8 domain maps to 463–499 (RADACLTNPCLHGGTCFTHFSGPVCQCVPGFMGSTCE). A helical transmembrane segment spans residues 523-543 (VSCVLGVLAVFLGVCVGLVVL). The Cytoplasmic portion of the chain corresponds to 544-615 (RRRRHRLRRQ…FLWSAGGGLR (72 aa)).

Ubiquitinated by mib, leading to its endocytosis and subsequent degradation.

It is found in the membrane. Acts as a ligand for Notch receptors and is involved in primary neurogenesis. Can activate Notch receptors, thereby playing a key role in lateral inhibition, a process that prevents the immediate neighbors of each nascent neural cell from simultaneously embarking on neural differentiation. This is Delta-like protein B (dlb) from Danio rerio (Zebrafish).